Consider the following 219-residue polypeptide: Large ribosomal subunit protein bL25 (219 aa).

Residues 194–219 are disordered; the sequence is SSTELEETPEVPASAVPTTDQGESAE. Residues 209 to 219 are compositionally biased toward polar residues; the sequence is VPTTDQGESAE.

It belongs to the bacterial ribosomal protein bL25 family. CTC subfamily. In terms of assembly, part of the 50S ribosomal subunit; part of the 5S rRNA/L5/L18/L25 subcomplex. Contacts the 5S rRNA. Binds to the 5S rRNA independently of L5 and L18.

Functionally, this is one of the proteins that binds to the 5S RNA in the ribosome where it forms part of the central protuberance. This chain is Large ribosomal subunit protein bL25, found in Legionella pneumophila (strain Paris).